Consider the following 74-residue polypeptide: MTLDLLEQLESKIQNTVDTIALLQMEVEELKEDKQVLTEKGEQLQAENIRLTEEHQKWQSRLSALVGKIEETES.

Residues 2–74 (TLDLLEQLES…LVGKIEETES (73 aa)) are a coiled coil.

It belongs to the ZapB family. Homodimer. The ends of the coiled-coil dimer bind to each other, forming polymers. Interacts with FtsZ.

Its subcellular location is the cytoplasm. In terms of biological role, non-essential, abundant cell division factor that is required for proper Z-ring formation. It is recruited early to the divisome by direct interaction with FtsZ, stimulating Z-ring assembly and thereby promoting cell division earlier in the cell cycle. Its recruitment to the Z-ring requires functional FtsA or ZipA. The protein is Cell division protein ZapB of Psychromonas ingrahamii (strain DSM 17664 / CCUG 51855 / 37).